The primary structure comprises 215 residues: uncharacterized protein (215 aa).

Belongs to the HAD-like hydrolase superfamily. CbbY/CbbZ/Gph/YieH family.

This is an uncharacterized protein from Lacticaseibacillus casei (Lactobacillus casei).